Here is a 48-residue protein sequence, read N- to C-terminus: Small polypeptide DEVIL 14 (48 aa).

Residues 4–23 traverse the membrane as a helical segment; it reads TVVLRCCTSVTKVRTWKRCS. Positions 17 to 48 are required for DVL/RTFL small polypeptide activity; the sequence is RTWKRCSKQIKEQRARLYIIWKCAVFLLSSHD.

This sequence belongs to the DVL/RTFL small polypeptides family.

The protein localises to the cell membrane. Its function is as follows. Small polypeptide acting as a regulatory molecule which coordinates cellular responses required for differentiation, growth and development, probably by restricting polar cell proliferation in lateral organs and coordinating socket cell recruitment and differentiation at trichome sites. In Arabidopsis thaliana (Mouse-ear cress), this protein is Small polypeptide DEVIL 14.